A 79-amino-acid polypeptide reads, in one-letter code: Sec-independent protein translocase protein TatA (79 aa).

The helical transmembrane segment at 1 to 21 (MGGFTSIWHWVIVLLVIVLLF) threads the bilayer. Residues 48–79 (EEEAKNEPKTLDAQVTQAKVHESSEIKNKQEG) are disordered. Over residues 66-79 (KVHESSEIKNKQEG) the composition is skewed to basic and acidic residues.

It belongs to the TatA/E family. In terms of assembly, the Tat system comprises two distinct complexes: a TatABC complex, containing multiple copies of TatA, TatB and TatC subunits, and a separate TatA complex, containing only TatA subunits. Substrates initially bind to the TatABC complex, which probably triggers association of the separate TatA complex to form the active translocon.

The protein resides in the cell inner membrane. Functionally, part of the twin-arginine translocation (Tat) system that transports large folded proteins containing a characteristic twin-arginine motif in their signal peptide across membranes. TatA could form the protein-conducting channel of the Tat system. This Helicobacter acinonychis (strain Sheeba) protein is Sec-independent protein translocase protein TatA.